Reading from the N-terminus, the 182-residue chain is UPF0301 protein CHU_1773 (182 aa).

It belongs to the UPF0301 (AlgH) family.

The protein is UPF0301 protein CHU_1773 of Cytophaga hutchinsonii (strain ATCC 33406 / DSM 1761 / CIP 103989 / NBRC 15051 / NCIMB 9469 / D465).